A 292-amino-acid polypeptide reads, in one-letter code: MFDFASYHRAATLADAINLLADNPQAKLLAGGTDVLIQLHHHNDRYRHIVDIHNLAELRGITLAEDGSLRIGSATTFTQLIEDSITQRHLPALCAAASSIAGPQIRNVATYGGNICNGATSADSATPTLIYDAKLEIHSPRGVRFVPINGFHTGPGKVSLEHDEILVAFHFPPQPKEHVGSAHFKYAMRDAMDISTIGCAAHCRLDNGNFSELRLAFGVAAPTPIRCQHAEQTAQNAPLNLQTLEAISESVLQDVAPRSSWRASKEFRLHLIQTMTKKVISEAVAAAGGKLQ.

The FAD-binding PCMH-type domain occupies 1–176 (MFDFASYHRA…VAFHFPPQPK (176 aa)). FAD contacts are provided by residues 27–34 (KLLAGGTD), 109–113 (ATYGG), Ile165, and Phe184.

As to quaternary structure, heterotrimer of XdhA, XdhB and XdhC. Requires FAD as cofactor.

It catalyses the reaction xanthine + NAD(+) + H2O = urate + NADH + H(+). The catalysed reaction is hypoxanthine + NAD(+) + H2O = xanthine + NADH + H(+). It functions in the pathway purine metabolism; hypoxanthine degradation; urate from hypoxanthine: step 1/2. Its pathway is purine metabolism; hypoxanthine degradation; urate from hypoxanthine: step 2/2. In terms of biological role, presumed to be a dehydrogenase, but possibly an oxidase. Participates in limited purine salvage (requires aspartate) but does not support aerobic growth on purines as the sole carbon source (purine catabolism). This is Xanthine dehydrogenase FAD-binding subunit (xdhB) from Escherichia coli O157:H7.